The following is a 20-amino-acid chain: Unknown protein from 2D-PAGE of needles (20 aa).

The sequence is that of Unknown protein from 2D-PAGE of needles from Pinus pinaster (Maritime pine).